The sequence spans 129 residues: Small ribosomal subunit protein uS12 (129 aa).

A 3-methylthioaspartic acid modification is found at Asp89. Positions Ser101–Lys129 are disordered. The span at Lys116–Lys129 shows a compositional bias: low complexity.

This sequence belongs to the universal ribosomal protein uS12 family. Part of the 30S ribosomal subunit. Contacts proteins S8 and S17. May interact with IF1 in the 30S initiation complex.

With S4 and S5 plays an important role in translational accuracy. Functionally, interacts with and stabilizes bases of the 16S rRNA that are involved in tRNA selection in the A site and with the mRNA backbone. Located at the interface of the 30S and 50S subunits, it traverses the body of the 30S subunit contacting proteins on the other side and probably holding the rRNA structure together. The combined cluster of proteins S8, S12 and S17 appears to hold together the shoulder and platform of the 30S subunit. The polypeptide is Small ribosomal subunit protein uS12 (Chlorobaculum parvum (strain DSM 263 / NCIMB 8327) (Chlorobium vibrioforme subsp. thiosulfatophilum)).